The primary structure comprises 303 residues: Ribosomal protein L11 methyltransferase (303 aa).

Thr144, Gly165, Asp187, and Asn235 together coordinate S-adenosyl-L-methionine.

The protein belongs to the methyltransferase superfamily. PrmA family.

The protein resides in the cytoplasm. The catalysed reaction is L-lysyl-[protein] + 3 S-adenosyl-L-methionine = N(6),N(6),N(6)-trimethyl-L-lysyl-[protein] + 3 S-adenosyl-L-homocysteine + 3 H(+). Its function is as follows. Methylates ribosomal protein L11. This chain is Ribosomal protein L11 methyltransferase, found in Prochlorococcus marinus (strain MIT 9312).